The following is an 842-amino-acid chain: MPLSYQHFRRILLLDEEAGPLEEELPRLADEDLNRRVAEDLNLQLPNVSIPWTHKVGNFSGLYSSTIPVFNPHWKTPSFPDIHLHQDIINKCEQFVGPLTVNEKRRLNLVMPARFFPISTKYLPLEKGIKPYYPDNVVNHYFQTRHYLHTLWKAGILYKRETTRSASFCGSPYSWEQELHHGAFLDGPSRMGEESFHHQSSGIFSRPPVGSSIQSKHQKSRLGPQSQQRPLDRSQQGRSGSIRAGVHSPTRRPFGVEPSGSRHAKNIASRSASCLHQSAVRKAAYPNHSTFERHSSSGHAVEFHNIPPSSAGSQSKRPVFSCWWLQFRNSEPCSDYCLSHLVNLLEDWGPCTEHGRHHIRIPRTPARVTGGVFLVDKNPHNTAESRLVVDFSQFSRGSSRVSWPKFAVPNLQSLTNLLSSNLSWLSLDVSAAFYHLPLHPAAMPHLLVGSSGLSRYVARLSSNSRIINHHYGTLPNLHDSCSRNLYVSLMLLFKTFGRKLHLYSHPIIMGFRKIPMGVGLSPFLLAQFTSAICSVVRRAFPHCLAFSYMDDVVLGAKSVQHLESLYTSVTNFLLSLGIHLNPNKTKRWGYSLNFMGYVIGSWGSLPQEHIRIKIKDCFRKLPVNRPIDWKVCQRIVGLLGFAAPFTQCGYPALMPLYACIQSKQAFTFSPTYKAFLCKQYLNLYPVARQRPGLCQVFADATPTGWGLAIGHQRMRGTFVAPLPIHTAELLAACFARSRSGAKLIGTDNSVVLSRKYTSFPWLLGCAANWILRGTSFVYVPSALNPADDPSRGRLGVCRPLLRLPFQPTTGRTSLYAVSPSVPSHLPDRVHFASPLHVAWRPP.

The segment at 1–177 (MPLSYQHFRR…FCGSPYSWEQ (177 aa)) is terminal protein domain (TP). The interval 178–345 (ELHHGAFLDG…YCLSHLVNLL (168 aa)) is spacer. Positions 186 to 273 (DGPSRMGEES…AKNIASRSAS (88 aa)) are disordered. Positions 223 to 239 (GPQSQQRPLDRSQQGRS) are enriched in polar residues. Residues 346–689 (EDWGPCTEHG…YLNLYPVARQ (344 aa)) are polymerase/reverse transcriptase domain (RT). Positions 356 to 599 (RHHIRIPRTP…YSLNFMGYVI (244 aa)) constitute a Reverse transcriptase domain. Asp-428, Asp-550, and Asp-551 together coordinate Mg(2+).

This sequence belongs to the hepadnaviridae P protein family.

The catalysed reaction is DNA(n) + a 2'-deoxyribonucleoside 5'-triphosphate = DNA(n+1) + diphosphate. It carries out the reaction Endonucleolytic cleavage to 5'-phosphomonoester.. With respect to regulation, activated by host HSP70 and HSP40 in vitro to be able to bind the epsilon loop of the pgRNA. Because deletion of the RNase H region renders the protein partly chaperone-independent, the chaperones may be needed indirectly to relieve occlusion of the RNA-binding site by this domain. Inhibited by several reverse-transcriptase inhibitors: Lamivudine, Adefovir and Entecavir. Functionally, multifunctional enzyme that converts the viral RNA genome into dsDNA in viral cytoplasmic capsids. This enzyme displays a DNA polymerase activity that can copy either DNA or RNA templates, and a ribonuclease H (RNase H) activity that cleaves the RNA strand of RNA-DNA heteroduplexes in a partially processive 3'- to 5'-endonucleasic mode. Neo-synthesized pregenomic RNA (pgRNA) are encapsidated together with the P protein, and reverse-transcribed inside the nucleocapsid. Initiation of reverse-transcription occurs first by binding the epsilon loop on the pgRNA genome, and is initiated by protein priming, thereby the 5'-end of (-)DNA is covalently linked to P protein. Partial (+)DNA is synthesized from the (-)DNA template and generates the relaxed circular DNA (RC-DNA) genome. After budding and infection, the RC-DNA migrates in the nucleus, and is converted into a plasmid-like covalently closed circular DNA (cccDNA). The activity of P protein does not seem to be necessary for cccDNA generation, and is presumably released from (+)DNA by host nuclear DNA repair machinery. The chain is Protein P from Homo sapiens (Human).